Consider the following 195-residue polypeptide: Probable prefoldin subunit 3 (195 aa).

The protein belongs to the prefoldin subunit alpha family. As to quaternary structure, heterohexamer of two PFD-alpha type and four PFD-beta type subunits.

In terms of biological role, binds specifically to cytosolic chaperonin (c-CPN) and transfers target proteins to it. Binds to nascent polypeptide chain and promotes folding in an environment in which there are many competing pathways for nonnative proteins. The chain is Probable prefoldin subunit 3 (pfdn3) from Dictyostelium discoideum (Social amoeba).